The following is a 424-amino-acid chain: Enolase (424 aa).

Residue Gln165 coordinates (2R)-2-phosphoglycerate. Catalysis depends on Glu207, which acts as the Proton donor. Residues Asp244, Glu283, and Asp310 each coordinate Mg(2+). Lys335, Arg364, Ser365, and Lys386 together coordinate (2R)-2-phosphoglycerate. Residue Lys335 is the Proton acceptor of the active site.

The protein belongs to the enolase family. The cofactor is Mg(2+).

The protein resides in the cytoplasm. It localises to the secreted. Its subcellular location is the cell surface. It catalyses the reaction (2R)-2-phosphoglycerate = phosphoenolpyruvate + H2O. Its pathway is carbohydrate degradation; glycolysis; pyruvate from D-glyceraldehyde 3-phosphate: step 4/5. Catalyzes the reversible conversion of 2-phosphoglycerate (2-PG) into phosphoenolpyruvate (PEP). It is essential for the degradation of carbohydrates via glycolysis. This Chlamydia trachomatis serovar L2 (strain ATCC VR-902B / DSM 19102 / 434/Bu) protein is Enolase.